The following is a 327-amino-acid chain: Gibberellin 2-beta-dioxygenase 3 (327 aa).

Residues 173–278 (GSDQVFRVNH…RVSFIYFGGP (106 aa)) form the Fe2OG dioxygenase domain. Tyr-183 is a 2-oxoglutarate binding site. Fe cation-binding residues include His-202, Asp-204, and His-259. Residues Arg-269 and Ser-271 each coordinate 2-oxoglutarate.

This sequence belongs to the iron/ascorbate-dependent oxidoreductase family. GA2OX subfamily. It depends on L-ascorbate as a cofactor. Fe(2+) is required as a cofactor. As to expression, expressed in roots, shoot apex, leaf blades, leaf sheaths, stems and flowers.

The catalysed reaction is gibberellin A1 + 2-oxoglutarate + O2 = gibberellin A8 + succinate + CO2. Its function is as follows. Catalyzes the 2-beta-hydroxylation of several biologically active gibberellins, leading to the homeostatic regulation of their endogenous level. Catabolism of gibberellins (GAs) plays a central role in plant development. In vitro, converts GA1, GA20, and GA29 to the corresponding 2-beta-hydroxylated products GA8, GA29-catabolite, respectively. The polypeptide is Gibberellin 2-beta-dioxygenase 3 (Oryza sativa subsp. japonica (Rice)).